A 64-amino-acid chain; its full sequence is Prokaryotic ubiquitin-like protein Pup (64 aa).

The span at M1–G11 shows a compositional bias: basic and acidic residues. The segment at M1–T36 is disordered. An ARC ATPase binding region spans residues G21–Y58. Residues A24–E52 adopt a coiled-coil conformation. Residue Q64 is modified to Deamidated glutamine. Residue Q64 forms an Isoglutamyl lysine isopeptide (Gln-Lys) (interchain with K-? in acceptor proteins) linkage.

It belongs to the prokaryotic ubiquitin-like protein family. Strongly interacts with the proteasome-associated ATPase ARC through a hydrophobic interface; the interacting region of Pup lies in its C-terminal half. There is one Pup binding site per ARC hexamer ring. Post-translationally, is modified by deamidation of its C-terminal glutamine to glutamate by the deamidase Dop, a prerequisite to the subsequent pupylation process.

Its pathway is protein degradation; proteasomal Pup-dependent pathway. Its function is as follows. Protein modifier that is covalently attached to lysine residues of substrate proteins, thereby targeting them for proteasomal degradation. The tagging system is termed pupylation. This chain is Prokaryotic ubiquitin-like protein Pup, found in Mycobacteroides abscessus (strain ATCC 19977 / DSM 44196 / CCUG 20993 / CIP 104536 / JCM 13569 / NCTC 13031 / TMC 1543 / L948) (Mycobacterium abscessus).